A 331-amino-acid chain; its full sequence is Ketol-acid reductoisomerase (NADP(+)) (331 aa).

Residues 2–182 (IKKYYDADCN…GAGRAGILET (181 aa)) form the KARI N-terminal Rossmann domain. Residues 25–28 (YGSQ), Arg48, and Ser51 each bind NADP(+). His108 is an active-site residue. Gly134 provides a ligand contact to NADP(+). The KARI C-terminal knotted domain maps to 183–329 (TFREETETDL…AELRKMMSWI (147 aa)). 4 residues coordinate Mg(2+): Asp191, Glu195, Glu227, and Glu231. Residue Ser252 participates in substrate binding.

It belongs to the ketol-acid reductoisomerase family. Mg(2+) is required as a cofactor.

It carries out the reaction (2R)-2,3-dihydroxy-3-methylbutanoate + NADP(+) = (2S)-2-acetolactate + NADPH + H(+). The catalysed reaction is (2R,3R)-2,3-dihydroxy-3-methylpentanoate + NADP(+) = (S)-2-ethyl-2-hydroxy-3-oxobutanoate + NADPH + H(+). It participates in amino-acid biosynthesis; L-isoleucine biosynthesis; L-isoleucine from 2-oxobutanoate: step 2/4. It functions in the pathway amino-acid biosynthesis; L-valine biosynthesis; L-valine from pyruvate: step 2/4. In terms of biological role, involved in the biosynthesis of branched-chain amino acids (BCAA). Catalyzes an alkyl-migration followed by a ketol-acid reduction of (S)-2-acetolactate (S2AL) to yield (R)-2,3-dihydroxy-isovalerate. In the isomerase reaction, S2AL is rearranged via a Mg-dependent methyl migration to produce 3-hydroxy-3-methyl-2-ketobutyrate (HMKB). In the reductase reaction, this 2-ketoacid undergoes a metal-dependent reduction by NADPH to yield (R)-2,3-dihydroxy-isovalerate. The protein is Ketol-acid reductoisomerase (NADP(+)) of Brachyspira hyodysenteriae (strain ATCC 49526 / WA1).